The sequence spans 313 residues: 4-diphosphocytidyl-2-C-methyl-D-erythritol kinase (313 aa).

K11 is an active-site residue. 99-109 serves as a coordination point for ATP; the sequence is PVAAGLAGGST. The active site involves D141.

The protein belongs to the GHMP kinase family. IspE subfamily.

The catalysed reaction is 4-CDP-2-C-methyl-D-erythritol + ATP = 4-CDP-2-C-methyl-D-erythritol 2-phosphate + ADP + H(+). It participates in isoprenoid biosynthesis; isopentenyl diphosphate biosynthesis via DXP pathway; isopentenyl diphosphate from 1-deoxy-D-xylulose 5-phosphate: step 3/6. Functionally, catalyzes the phosphorylation of the position 2 hydroxy group of 4-diphosphocytidyl-2C-methyl-D-erythritol. The sequence is that of 4-diphosphocytidyl-2-C-methyl-D-erythritol kinase from Microcystis aeruginosa (strain NIES-843 / IAM M-2473).